Here is a 216-residue protein sequence, read N- to C-terminus: Somatotropin (216 aa).

Residues 1-25 (MAPGSWFSPLFITVITLGLQWPQEA) form the signal peptide. Residue H46 participates in Zn(2+) binding. C78 and C189 are oxidised to a cystine. E198 contacts Zn(2+). C206 and C214 are oxidised to a cystine.

The protein belongs to the somatotropin/prolactin family.

Its subcellular location is the secreted. Functionally, growth hormone plays an important role in growth control. The sequence is that of Somatotropin (GH) from Anas platyrhynchos (Mallard).